Consider the following 226-residue polypeptide: X-linked lymphocyte-regulated protein 3A (226 aa).

A compositionally biased stretch (basic and acidic residues) spans 1 to 18 (MSSRERKATDTAGRHSRM). A disordered region spans residues 1-72 (MSSRERKATD…QDLVQEFEEP (72 aa)). Positions 21 to 30 (NLSSDDSQNP) are enriched in polar residues. 2 stretches are compositionally biased toward basic and acidic residues: residues 39–48 (EVLDAGREDI) and 56–65 (QQARKEKQDL). Residues 155–210 (ETLTLQKNRMEEFKSLCEKYLEKLEVLRDSRGNSIAEELRRLIATLEIKLLMLHNQ) adopt a coiled-coil conformation.

Belongs to the XLR/SYCP3 family. Expressed in lymphoid cells.

This is X-linked lymphocyte-regulated protein 3A (Xlr3a) from Mus musculus (Mouse).